Here is a 238-residue protein sequence, read N- to C-terminus: MNISGSIKQKLLQFLKKQKSPELLATYLFYLEQSLHLSPVVFVRDKVIFKSAEDAIALLEADKKIWRETEIQISSGKPEVNEQTKRIYICPFTGKVFADNVYANPLDAVYDWLSSCPQNKERQAGVAVKRFLVSDDPEVIRAYIVPPKEPLIKTVYASAITGKLFHSLPTLLEDFKTSYLRPMTLEEVQNQNKFQLESSFLTLLQDALEEEKIAEFVESLADDTAFHEYISQWVDTEE.

Belongs to the chlamydial CPn_0658/CT_538/TC_0825 family.

This is an uncharacterized protein from Chlamydia muridarum (strain MoPn / Nigg).